The primary structure comprises 125 residues: Small ribosomal subunit protein uS12 (125 aa).

Asp-89 bears the 3-methylthioaspartic acid mark.

This sequence belongs to the universal ribosomal protein uS12 family. In terms of assembly, part of the 30S ribosomal subunit. Contacts proteins S8 and S17. May interact with IF1 in the 30S initiation complex.

Functionally, with S4 and S5 plays an important role in translational accuracy. In terms of biological role, interacts with and stabilizes bases of the 16S rRNA that are involved in tRNA selection in the A site and with the mRNA backbone. Located at the interface of the 30S and 50S subunits, it traverses the body of the 30S subunit contacting proteins on the other side and probably holding the rRNA structure together. The combined cluster of proteins S8, S12 and S17 appears to hold together the shoulder and platform of the 30S subunit. This Cupriavidus metallidurans (strain ATCC 43123 / DSM 2839 / NBRC 102507 / CH34) (Ralstonia metallidurans) protein is Small ribosomal subunit protein uS12.